A 205-amino-acid chain; its full sequence is LexA repressor (205 aa).

Residues 28-48 (RAEIARRLGFKSANAAEEHLK) constitute a DNA-binding region (H-T-H motif). Catalysis depends on for autocatalytic cleavage activity residues S122 and K159.

This sequence belongs to the peptidase S24 family. Homodimer.

The enzyme catalyses Hydrolysis of Ala-|-Gly bond in repressor LexA.. Represses a number of genes involved in the response to DNA damage (SOS response), including recA and lexA. In the presence of single-stranded DNA, RecA interacts with LexA causing an autocatalytic cleavage which disrupts the DNA-binding part of LexA, leading to derepression of the SOS regulon and eventually DNA repair. The protein is LexA repressor of Shewanella loihica (strain ATCC BAA-1088 / PV-4).